The sequence spans 451 residues: AP-3 complex subunit mu (451 aa).

An MHD domain is found at 191-450 (NNEIYVDLVE…TSRAGDYIVR (260 aa)).

Belongs to the adaptor complexes medium subunit family. In terms of assembly, adaptor protein complex 3 (AP-3) is a heterotetramer composed of 2 large adaptins (APL5 and APL6), a medium adaptin (APM3) and a small adaptin (APS3).

The protein localises to the golgi apparatus. Its subcellular location is the cytoplasmic vesicle membrane. Its function is as follows. Part of the AP-3 complex, an adaptor-related complex which is not clathrin-associated. The complex is associated with the Golgi region as well as more peripheral structures. It facilitates the budding of vesicles from the Golgi membrane and may be directly involved in trafficking to the vacuole. The polypeptide is AP-3 complex subunit mu (APM3) (Eremothecium gossypii (strain ATCC 10895 / CBS 109.51 / FGSC 9923 / NRRL Y-1056) (Yeast)).